Reading from the N-terminus, the 271-residue chain is Shikimate dehydrogenase (NADP(+)) (271 aa).

Shikimate-binding positions include 19–21 (SLS) and threonine 65. The Proton acceptor role is filled by lysine 69. Glutamate 81 provides a ligand contact to NADP(+). Residues asparagine 90 and aspartate 105 each coordinate shikimate. Residues 128-132 (GAGGA), 150-155 (NRTIEK), and isoleucine 211 contribute to the NADP(+) site. Position 213 (tyrosine 213) interacts with shikimate. Position 234 (glycine 234) interacts with NADP(+).

Belongs to the shikimate dehydrogenase family. In terms of assembly, homodimer.

It catalyses the reaction shikimate + NADP(+) = 3-dehydroshikimate + NADPH + H(+). It participates in metabolic intermediate biosynthesis; chorismate biosynthesis; chorismate from D-erythrose 4-phosphate and phosphoenolpyruvate: step 4/7. Its function is as follows. Involved in the biosynthesis of the chorismate, which leads to the biosynthesis of aromatic amino acids. Catalyzes the reversible NADPH linked reduction of 3-dehydroshikimate (DHSA) to yield shikimate (SA). This chain is Shikimate dehydrogenase (NADP(+)), found in Pyrococcus furiosus (strain ATCC 43587 / DSM 3638 / JCM 8422 / Vc1).